A 513-amino-acid polypeptide reads, in one-letter code: ATP synthase subunit alpha (513 aa).

169–176 (GDRQIGKT) contacts ATP.

It belongs to the ATPase alpha/beta chains family. F-type ATPases have 2 components, CF(1) - the catalytic core - and CF(0) - the membrane proton channel. CF(1) has five subunits: alpha(3), beta(3), gamma(1), delta(1), epsilon(1). CF(0) has three main subunits: a(1), b(2) and c(9-12). The alpha and beta chains form an alternating ring which encloses part of the gamma chain. CF(1) is attached to CF(0) by a central stalk formed by the gamma and epsilon chains, while a peripheral stalk is formed by the delta and b chains.

It localises to the cell inner membrane. The catalysed reaction is ATP + H2O + 4 H(+)(in) = ADP + phosphate + 5 H(+)(out). Produces ATP from ADP in the presence of a proton gradient across the membrane. The alpha chain is a regulatory subunit. The chain is ATP synthase subunit alpha from Shewanella halifaxensis (strain HAW-EB4).